The sequence spans 227 residues: Atypical response regulator protein ChxR (227 aa).

Residues 6-108 (HVLLVSEHWD…ILKSAISLFL (103 aa)) form the Response regulatory domain. Positions 117 to 213 (PESIRFGPNV…LRGVGYLFSD (97 aa)) form a DNA-binding region, ompR/PhoB-type.

In terms of assembly, homodimer.

May be a global positive regulator of transcription. Binds a cis-acting element of its own promoter DNA sequence and is hence probably also involved in its own transcription activation. The recognition sequence is 5'-WHGAWNH-N(3-5)-WHGAWNH-3', where W is A/T, H is C/A/T, N is G/C/A/T and the linker length in the middle is 3 to 5 nucleotides. This is Atypical response regulator protein ChxR from Chlamydia trachomatis serovar L2 (strain ATCC VR-902B / DSM 19102 / 434/Bu).